The primary structure comprises 270 residues: Putative hydro-lyase H16_B1759 (270 aa).

The protein belongs to the D-glutamate cyclase family.

This is Putative hydro-lyase H16_B1759 from Cupriavidus necator (strain ATCC 17699 / DSM 428 / KCTC 22496 / NCIMB 10442 / H16 / Stanier 337) (Ralstonia eutropha).